Consider the following 1642-residue polypeptide: Cholesterol transporter ABCA5 (1642 aa).

The helical transmembrane segment at 32–52 threads the bilayer; sequence SVQEILFPLFFLFWLILISMM. Asparagine 86 carries N-linked (GlcNAc...) asparagine glycosylation. 6 consecutive transmembrane segments (helical) span residues 220-240, 264-284, 297-317, 328-348, 355-375, and 396-416; these read VILIYLVIAFSPFGYFLAIHI, LSWVLLYTSLIFLMSLLMAVI, IVIFLLFFLYGLSSVFFALML, GIVEFFVTVAFGFIGLMIILI, LVWLFSPFCHCTFVIGIAQVM, and LIITIIMLTLNSIFYVLLAVY. An N-linked (GlcNAc...) asparagine glycan is attached at asparagine 458. Residues 478-713 enclose the ABC transporter 1 domain; that stretch reads IRISGIQKTY…WGIGYRLSMY (236 aa). Position 514 to 521 (514 to 521) interacts with ATP; sequence GHSGTGKS. 2 helical membrane-spanning segments follow: residues 866–886 and 967–987; these read LLLLLIFFTVQIFMFLVHHSF and VFAAVFNSTMVYSLPILVNII. Asparagine 996 carries an N-linked (GlcNAc...) asparagine glycan. 6 helical membrane passes run 1021-1041, 1071-1091, 1102-1122, 1139-1159, 1169-1189, and 1207-1227; these read LYFQAALLGIIVTAMPPYFAM, VVDIPLFFIILILMLGSLLAF, FLAVVFCLIGYVPSVILFTYI, FIYSVAALACIAITEITFFMG, AFCIIIPIYPLLGCLISFIKI, and LSVAVISPYLQCVLWIFLLQY. A disordered region spans residues 1249–1268; that stretch reads KSKNRKLPEPPDNEDEDEDV. Acidic residues predominate over residues 1259–1268; sequence PDNEDEDEDV. The ABC transporter 2 domain occupies 1290–1533; that stretch reads IMVSNLHKEY…FGKGYFLEIK (244 aa). 1333-1340 contacts ATP; sequence GPNGAGKS.

Belongs to the ABC transporter superfamily. ABCA family. N-glycosylated. In terms of tissue distribution, ubiquitously expressed. Highly expressed in testis, skeletal muscle, kidney, liver and placenta. Expressed in both the epithelial and mesenchymal compartments, present within the outer root sheath (ORS) of the hair follicle as well as dermal sheath. Expressed in multiple regions of the brain, including the hippocampus, superior frontal and inferior temporal cortices. Strongly expressed in neurons and moderately in microglia, with only weak expression in astrocytes and oligodendrocytes.

The protein localises to the golgi apparatus membrane. Its subcellular location is the lysosome membrane. The protein resides in the late endosome membrane. It is found in the cell membrane. It carries out the reaction cholesterol(in) + ATP + H2O = cholesterol(out) + ADP + phosphate + H(+). In terms of biological role, cholesterol efflux transporter in macrophages that is responsible for APOAI/high-density lipoproteins (HDL) formation at the plasma membrane under high cholesterol levels and participates in reverse cholesterol transport. May play a role in the processing of autolysosomes. This is Cholesterol transporter ABCA5 from Homo sapiens (Human).